The chain runs to 129 residues: Small ribosomal subunit protein uS11 (129 aa).

This sequence belongs to the universal ribosomal protein uS11 family. In terms of assembly, part of the 30S ribosomal subunit. Interacts with proteins S7 and S18. Binds to IF-3.

Functionally, located on the platform of the 30S subunit, it bridges several disparate RNA helices of the 16S rRNA. Forms part of the Shine-Dalgarno cleft in the 70S ribosome. The protein is Small ribosomal subunit protein uS11 of Phocaeicola vulgatus (strain ATCC 8482 / DSM 1447 / JCM 5826 / CCUG 4940 / NBRC 14291 / NCTC 11154) (Bacteroides vulgatus).